The primary structure comprises 214 residues: Small ribosomal subunit protein uS3c (214 aa).

A KH type-2 domain is found at 39-111 (IRTYLNKLAK…QITINVVEVE (73 aa)).

This sequence belongs to the universal ribosomal protein uS3 family. As to quaternary structure, part of the 30S ribosomal subunit.

The protein resides in the plastid. It localises to the chloroplast. In Thalassiosira pseudonana (Marine diatom), this protein is Small ribosomal subunit protein uS3c (rps3).